The following is a 394-amino-acid chain: Ribulose bisphosphate carboxylase large chain (394 aa).

At Lys-5 the chain carries N6,N6,N6-trimethyllysine. Substrate-binding residues include Asn-114 and Thr-164. Residue Lys-166 is the Proton acceptor of the active site. Lys-168 serves as a coordination point for substrate. Mg(2+) contacts are provided by Lys-192, Asp-194, and Glu-195. Position 192 is an N6-carboxylysine (Lys-192). His-285 serves as the catalytic Proton acceptor. The substrate site is built by Arg-286, His-318, and Ser-370.

This sequence belongs to the RuBisCO large chain family. Type I subfamily. In terms of assembly, heterohexadecamer of 8 large chains and 8 small chains. Mg(2+) serves as cofactor.

The protein localises to the plastid. It localises to the chloroplast. It carries out the reaction 2 (2R)-3-phosphoglycerate + 2 H(+) = D-ribulose 1,5-bisphosphate + CO2 + H2O. The enzyme catalyses D-ribulose 1,5-bisphosphate + O2 = 2-phosphoglycolate + (2R)-3-phosphoglycerate + 2 H(+). RuBisCO catalyzes two reactions: the carboxylation of D-ribulose 1,5-bisphosphate, the primary event in carbon dioxide fixation, as well as the oxidative fragmentation of the pentose substrate in the photorespiration process. Both reactions occur simultaneously and in competition at the same active site. This is Ribulose bisphosphate carboxylase large chain (rbcL) from Cabomba caroliniana (Carolina fanwort).